The sequence spans 399 residues: Protein DDI1 homolog 2 (399 aa).

The region spanning 1-81 (MLLTVYCVRR…VILRQKENAD (81 aa)) is the Ubiquitin-like domain. The tract at residues 99–134 (IAVPGTSSPRQRQPPGTQQSHSSPGEITSSPQGLDN) is disordered. Positions 103-131 (GTSSPRQRQPPGTQQSHSSPGEITSSPQG) are enriched in polar residues. A Phosphothreonine modification is found at Thr-104. Phosphoserine is present on residues Ser-106, Ser-121, Ser-128, Ser-150, and Ser-194. Residue Asp-252 is part of the active site. The short motif at 376–395 (EEIADQELAEALQKSAEDAE) is the Ubiquitin-binding element.

This sequence belongs to the DDI1 family. In terms of assembly, homodimer. Interacts with MCM6; PCNA; PSMD4; PSMD8; RPA2 and RPN2. Interacts with RTF2.

The protein resides in the cytoplasm. Its subcellular location is the cytosol. It localises to the chromosome. In terms of biological role, aspartic protease that mediates the cleavage of NFE2L1/NRF1 at 'Leu-104', thereby promoting release of NFE2L1/NRF1 from the endoplasmic reticulum membrane. Ubiquitination of NFE2L1/NRF1 is a prerequisite for cleavage, suggesting that DDI2 specifically recognizes and binds ubiquitinated NFE2L1/NRF1. Seems to act as a proteasomal shuttle which links the proteasome and replication fork proteins like RTF2. Required, with DDI1, for cellular survival following replication stress. Together or redudantly with DDI1, removes RTF2 from stalled forks to allow cell cycle progression after replication stress and maintains genome integrity. The chain is Protein DDI1 homolog 2 from Homo sapiens (Human).